The chain runs to 553 residues: Putative transport protein YidE (553 aa).

5 helical membrane passes run 4 to 24 (IALTVSVLALVAVVGLWIGNI), 28 to 48 (GVGFGIGGVLFGGIIVGHFVD), 65 to 85 (FGLILFVYTIGIQVGPGFFAS), 95 to 115 (LFAVLIVIMGGLVTAILHKIF), and 158 to 178 (MSYAMAYPFGICGILLTMWLM). 2 RCK C-terminal domains span residues 192 to 276 (KHES…VIGK) and 279 to 361 (DTSL…VVGN). Helical transmembrane passes span 371 to 391 (MLPVFIGIGLGVLLGSIPLFV), 393 to 413 (GFPVALKLGLAGGPLIMALIL), 437 to 457 (LGIVLFLAVVGLKSGGDFVDT), 464 to 484 (LSWIGYGIFITAIPLITVGLL), 493 to 513 (YLTLCGMLAGSMTDPPALAFA), and 533 to 553 (LVMFLRIITPQLLAVIFWGMG).

The protein belongs to the AAE transporter (TC 2.A.81) family. YidE subfamily.

Its subcellular location is the cell membrane. The protein is Putative transport protein YidE of Salmonella newport (strain SL254).